The following is a 438-amino-acid chain: uncharacterized protein (438 aa).

Residues 23–193 (IHAKPPVVVV…VNATIRLTAA (171 aa)) enclose the FAD-binding PCMH-type domain. FAD is bound by residues 55 to 59 (VRGSG), 60 to 61 (HS), Q65, D117, T122, 128 to 132 (SVGGF), I183, Y393, and 430 to 433 (APGY). The residue at position 60 (H60) is a Pros-8alpha-FAD histidine.

This sequence belongs to the oxygen-dependent FAD-linked oxidoreductase family. It depends on FAD as a cofactor.

The FAS-operon encodes genes involved in cytokinin production and in host plant fasciation (leafy gall). This is an uncharacterized protein from Rhodococcoides fascians (Rhodococcus fascians).